Here is a 768-residue protein sequence, read N- to C-terminus: Probable beta-glucosidase M (768 aa).

The N-terminal stretch at 1–19 (MHAIAGLTGLLAGVSLSYA) is a signal peptide. 3 N-linked (GlcNAc...) asparagine glycosylation sites follow: Asn-25, Asn-72, and Asn-259. Residue Asp-287 is part of the active site. Residues Asn-315, Asn-322, Asn-394, Asn-434, Asn-472, Asn-543, and Asn-651 are each glycosylated (N-linked (GlcNAc...) asparagine).

It belongs to the glycosyl hydrolase 3 family.

The protein resides in the secreted. The catalysed reaction is Hydrolysis of terminal, non-reducing beta-D-glucosyl residues with release of beta-D-glucose.. It participates in glycan metabolism; cellulose degradation. Functionally, beta-glucosidases are one of a number of cellulolytic enzymes involved in the degradation of cellulosic biomass. Catalyzes the last step releasing glucose from the inhibitory cellobiose. The polypeptide is Probable beta-glucosidase M (bglM) (Aspergillus oryzae (strain ATCC 42149 / RIB 40) (Yellow koji mold)).